Here is a 48-residue protein sequence, read N- to C-terminus: Delta-actitoxin-Bcg1c (48 aa).

3 cysteine pairs are disulfide-bonded: Cys-4–Cys-45, Cys-6–Cys-35, and Cys-28–Cys-46.

The protein localises to the secreted. The protein resides in the nematocyst. Functionally, binds specifically to voltage-gated sodium channels SCN1A/Nav1.1, thereby delaying their inactivation during signal transduction. The protein is Delta-actitoxin-Bcg1c of Bunodosoma cangicum (Sea anemone).